The following is a 711-amino-acid chain: Polyribonucleotide nucleotidyltransferase (711 aa).

Mg(2+)-binding residues include D486 and D492. Residues 553–612 (PRIHTIKINPDKIKDVIGKGGSVIRALTEETGTTIEIEDDGTVKIAATDGEKAKNAIRRI) enclose the KH domain. The S1 motif domain maps to 622–690 (GRVYNGKVTR…RQGRIRLSIK (69 aa)). Positions 689–711 (IKEATEQSQPAAAPEAPAAEQGE) are disordered. The span at 694-711 (EQSQPAAAPEAPAAEQGE) shows a compositional bias: low complexity.

This sequence belongs to the polyribonucleotide nucleotidyltransferase family. Component of the RNA degradosome, which is a multiprotein complex involved in RNA processing and mRNA degradation. Requires Mg(2+) as cofactor.

The protein resides in the cytoplasm. The catalysed reaction is RNA(n+1) + phosphate = RNA(n) + a ribonucleoside 5'-diphosphate. In terms of biological role, involved in mRNA degradation. Catalyzes the phosphorolysis of single-stranded polyribonucleotides processively in the 3'- to 5'-direction. This is Polyribonucleotide nucleotidyltransferase from Escherichia fergusonii (strain ATCC 35469 / DSM 13698 / CCUG 18766 / IAM 14443 / JCM 21226 / LMG 7866 / NBRC 102419 / NCTC 12128 / CDC 0568-73).